The following is an 802-amino-acid chain: Lon protease (802 aa).

Residues Leu21–Ile215 enclose the Lon N-terminal domain. Gly367 to Thr374 contacts ATP. In terms of domain architecture, Lon proteolytic spans Glu603–Arg784. Active-site residues include Ser690 and Lys733.

It belongs to the peptidase S16 family. In terms of assembly, homohexamer. Organized in a ring with a central cavity.

It is found in the cytoplasm. The catalysed reaction is Hydrolysis of proteins in presence of ATP.. Functionally, ATP-dependent serine protease that mediates the selective degradation of mutant and abnormal proteins as well as certain short-lived regulatory proteins. Required for cellular homeostasis and for survival from DNA damage and developmental changes induced by stress. Degrades polypeptides processively to yield small peptide fragments that are 5 to 10 amino acids long. Binds to DNA in a double-stranded, site-specific manner. The polypeptide is Lon protease (Endomicrobium trichonymphae).